A 330-amino-acid polypeptide reads, in one-letter code: Cytoskeleton protein RodZ (330 aa).

At 1-111 (MNTEATQDHQ…LGKRRKKRDG (111 aa)) the chain is on the cytoplasmic side. Positions 19 to 71 (LRHAREQLGLSQQAVAERLCLKVSTVRDIEDDKAPADLASTFLRGYIRSYARL) constitute an HTH cro/C1-type domain. Residues 30–49 (QQAVAERLCLKVSTVRDIED) constitute a DNA-binding region (H-T-H motif). The chain crosses the membrane as a helical; Signal-anchor for type II membrane protein span at residues 112 to 132 (WLMSFTWLVLFVVIGLSGAWW). Topologically, residues 133–330 (WQDHKAQQEE…TLNAEQSPAQ (198 aa)) are periplasmic. The span at 146-166 (MADQSSAELNGGDANSQNVPL) shows a compositional bias: polar residues. Residues 146-237 (MADQSSAELN…ASPLPTDQAN (92 aa)) are disordered. Low complexity-rich tracts occupy residues 176 to 202 (TDSAANSAPTDTASTPTTSAPAQTPAD) and 216 to 233 (TAGTAPTTPATPASPLPT).

This sequence belongs to the RodZ family.

The protein resides in the cell inner membrane. Its function is as follows. Cytoskeletal protein that is involved in cell-shape control through regulation of the length of the long axis. This Klebsiella pneumoniae (strain 342) protein is Cytoskeleton protein RodZ.